Here is a 247-residue protein sequence, read N- to C-terminus: UPF0259 membrane protein BUAP5A_271 (247 aa).

The next 6 membrane-spanning stretches (helical) occupy residues 20 to 40 (IGAI…IDMF), 85 to 105 (IMES…LISV), 114 to 134 (IVSS…LNFL), 137 to 157 (FIIQ…SIIL), 188 to 208 (IIGP…MLLA), and 218 to 238 (LFLI…IYLF).

It belongs to the UPF0259 family.

The protein resides in the cell membrane. This is UPF0259 membrane protein BUAP5A_271 from Buchnera aphidicola subsp. Acyrthosiphon pisum (strain 5A).